Reading from the N-terminus, the 477-residue chain is Exodeoxyribonuclease 7 large subunit (477 aa).

The tract at residues 456 to 477 (GGTVAPRKAPPKKPGGGQGSLL) is disordered.

This sequence belongs to the XseA family. As to quaternary structure, heterooligomer composed of large and small subunits.

The protein resides in the cytoplasm. It carries out the reaction Exonucleolytic cleavage in either 5'- to 3'- or 3'- to 5'-direction to yield nucleoside 5'-phosphates.. Functionally, bidirectionally degrades single-stranded DNA into large acid-insoluble oligonucleotides, which are then degraded further into small acid-soluble oligonucleotides. The protein is Exodeoxyribonuclease 7 large subunit of Parvibaculum lavamentivorans (strain DS-1 / DSM 13023 / NCIMB 13966).